A 482-amino-acid chain; its full sequence is Probable cytosol aminopeptidase (482 aa).

Lys251 and Asp256 together coordinate Mn(2+). Residue Lys263 is part of the active site. Residues Asp274, Asp333, and Glu335 each coordinate Mn(2+). Arg337 is an active-site residue.

This sequence belongs to the peptidase M17 family. Mn(2+) serves as cofactor.

The protein localises to the cytoplasm. The enzyme catalyses Release of an N-terminal amino acid, Xaa-|-Yaa-, in which Xaa is preferably Leu, but may be other amino acids including Pro although not Arg or Lys, and Yaa may be Pro. Amino acid amides and methyl esters are also readily hydrolyzed, but rates on arylamides are exceedingly low.. It carries out the reaction Release of an N-terminal amino acid, preferentially leucine, but not glutamic or aspartic acids.. In terms of biological role, presumably involved in the processing and regular turnover of intracellular proteins. Catalyzes the removal of unsubstituted N-terminal amino acids from various peptides. In Acinetobacter baylyi (strain ATCC 33305 / BD413 / ADP1), this protein is Probable cytosol aminopeptidase.